Here is a 63-residue protein sequence, read N- to C-terminus: Cecropin-A1 (63 aa).

The N-terminal stretch at 1 to 23 is a signal peptide; sequence MNFYNIFVFVALILAITIGQSEA. Residue arginine 62 is modified to Arginine amide.

Belongs to the cecropin family.

The protein localises to the secreted. Functionally, cecropins have lytic and antibacterial activity against several Gram-positive and Gram-negative bacteria. The sequence is that of Cecropin-A1 (CecA1) from Drosophila sechellia (Fruit fly).